Here is a 171-residue protein sequence, read N- to C-terminus: Adenine phosphoribosyltransferase (171 aa).

This sequence belongs to the purine/pyrimidine phosphoribosyltransferase family. As to quaternary structure, homodimer.

It is found in the cytoplasm. It catalyses the reaction AMP + diphosphate = 5-phospho-alpha-D-ribose 1-diphosphate + adenine. Its pathway is purine metabolism; AMP biosynthesis via salvage pathway; AMP from adenine: step 1/1. Catalyzes a salvage reaction resulting in the formation of AMP, that is energically less costly than de novo synthesis. The chain is Adenine phosphoribosyltransferase from Methylococcus capsulatus (strain ATCC 33009 / NCIMB 11132 / Bath).